Here is a 256-residue protein sequence, read N- to C-terminus: Calsenilin (256 aa).

The tract at residues M1–I22 is disordered. S14 bears the Phosphoserine mark. K26 is covalently cross-linked (Glycyl lysine isopeptide (Lys-Gly) (interchain with G-Cter in SUMO1)). 2 S-palmitoyl cysteine lipidation sites follow: C45 and C46. Residues S60 and S63 each carry the phosphoserine modification. The 57-residue stretch at L67–P123 folds into the EF-hand 1; degenerate domain. K90 participates in a covalent cross-link: Glycyl lysine isopeptide (Lys-Gly) (interchain with G-Cter in SUMO1). EF-hand domains lie at D126–G161, T162–M197, and A210–I245. D175, N177, D179, Y181, E186, D223, N225, D227, and E234 together coordinate Ca(2+). The interaction with KCND2 stretch occupies residues E243–I256.

It belongs to the recoverin family. Binds to DNA as a homomultimer. Dimerization is induced by binding to calcium. Interacts with the C-terminus of PSEN1 and PSEN2 and with PSEN2 CTF subunit. Associates with KCN1. Component of heteromultimeric potassium channels. Identified in potassium channel complexes containing KCND1, KCND2, KCND3, KCNIP1, KCNIP2, KCNIP3, KCNIP4, DPP6 and DPP10. Interacts with KCND2 and KCND3. Palmitoylated. Palmitoylation enhances association with the plasma membrane. Post-translationally, proteolytically cleaved by caspase-3. Detected in brain cortex, thalamus, dentate gyrus and cerebellum (at protein level). Expressed in brain. Colocalizes with KCND2 in excitatory neurons including cortical and hippocampal CA1 pyramidal cells.

It is found in the cytoplasm. The protein resides in the cell membrane. It localises to the endoplasmic reticulum. The protein localises to the golgi apparatus. Its subcellular location is the nucleus. Calcium-dependent transcriptional repressor that binds to the DRE element of genes including PDYN and FOS. Affinity for DNA is reduced upon binding to calcium and enhanced by binding to magnesium. Seems to be involved in nociception. In terms of biological role, regulatory subunit of Kv4/D (Shal)-type voltage-gated rapidly inactivating A-type potassium channels, such as KCND2/Kv4.2 and KCND3/Kv4.3. Modulates channel expression at the cell membrane, gating characteristics, inactivation kinetics and rate of recovery from inactivation in a calcium-dependent and isoform-specific manner. Functionally, may play a role in the regulation of PSEN2 proteolytic processing and apoptosis. Together with PSEN2 involved in modulation of amyloid-beta formation. The protein is Calsenilin (Kcnip3) of Rattus norvegicus (Rat).